The sequence spans 335 residues: DNA-directed RNA polymerases I and III subunit RPAC1 (335 aa).

N-acetylserine is present on Ser2. The residue at position 17 (Ser17) is a Phosphoserine.

Belongs to the archaeal Rpo3/eukaryotic RPB3 RNA polymerase subunit family. Component of the RNA polymerase I (Pol I) complex consisting of 14 subunits: RPA135, RPA190, RPC40, RPA14, RPB5, RPO26, RPA43, RPB8, RPA12, RPB10, RPC19, RPC10, RPA49 and RPA34. The complex is composed of a horseshoe-shaped core containing ten subunits (RPA135, RPA190, RPB5, RPO26, RPB8, RPB10, RPC10, RPA12, RPC19 and RPC40) where RPA135 and RPA190 form the DNA-binding cleft. Outside of the core, RPA14 and RPA43 form the stalk that mediates interactions with transcription initiation factors and newly synthesized RNA. Component of the RNA polymerase III (Pol III) complex consisting of at least 17 subunits. Interacts with the RPC19/RPAC2 and RPC53/RPC4. Interacts with retrotransposons Ty integrase, targeting Ty1, Ty2 and Ty4 integration upstream of pol III-transcribed genes.

It localises to the nucleus. It is found in the nucleolus. In terms of biological role, DNA-dependent RNA polymerases catalyze the transcription of DNA into RNA using the four ribonucleoside triphosphates as substrates. Common component of RNA polymerases I (Pol I) and III (Pol III) which synthesize ribosomal RNA precursors and small RNAs, such as 5S rRNA and tRNAs, respectively. RPC40 is part of the polymerase core and may function as a clamp element that moves to open and close the cleft. Plays an important role in targeting retrotransposons Ty integration upstream of pol III-transcribed genes such as tRNA genes, allowing Ty1, Ty2 and Ty4 to proliferate and yet minimizing genetic damage. This chain is DNA-directed RNA polymerases I and III subunit RPAC1, found in Saccharomyces cerevisiae (strain ATCC 204508 / S288c) (Baker's yeast).